The sequence spans 172 residues: Translation initiation factor IF-3 (172 aa).

The protein belongs to the IF-3 family. Monomer.

The protein localises to the cytoplasm. In terms of biological role, IF-3 binds to the 30S ribosomal subunit and shifts the equilibrium between 70S ribosomes and their 50S and 30S subunits in favor of the free subunits, thus enhancing the availability of 30S subunits on which protein synthesis initiation begins. This Geobacter sulfurreducens (strain ATCC 51573 / DSM 12127 / PCA) protein is Translation initiation factor IF-3.